We begin with the raw amino-acid sequence, 99 residues long: HssA/B-like protein 41 (99 aa).

The interval 1-29 (MTLFSSISSISNPMTSSKSSISSFGSGTS) is disordered.

This sequence belongs to the hssA/B family.

The sequence is that of HssA/B-like protein 41 (hssl41) from Dictyostelium discoideum (Social amoeba).